Consider the following 535-residue polypeptide: CTP synthase (535 aa).

Residues 1-266 (MKTKFIFITG…DERVVEKLNI (266 aa)) are amidoligase domain. Ser-14 lines the CTP pocket. Ser-14 contributes to the UTP binding site. Residues 15–20 (SIGKGL) and Asp-72 each bind ATP. Positions 72 and 140 each coordinate Mg(2+). CTP is bound by residues 147–149 (DIE), 187–192 (KTKPTQ), and Lys-223. UTP-binding positions include 187–192 (KTKPTQ) and Lys-223. The Glutamine amidotransferase type-1 domain maps to 292 to 534 (RIAIVGKYVN…VRAALIQRDA (243 aa)). Residue Gly-354 coordinates L-glutamine. The active-site Nucleophile; for glutamine hydrolysis is the Cys-381. Residues 382 to 385 (LGMQ), Glu-405, and Arg-462 contribute to the L-glutamine site. Catalysis depends on residues His-507 and Glu-509.

It belongs to the CTP synthase family. As to quaternary structure, homotetramer.

The catalysed reaction is UTP + L-glutamine + ATP + H2O = CTP + L-glutamate + ADP + phosphate + 2 H(+). The enzyme catalyses L-glutamine + H2O = L-glutamate + NH4(+). It carries out the reaction UTP + NH4(+) + ATP = CTP + ADP + phosphate + 2 H(+). It functions in the pathway pyrimidine metabolism; CTP biosynthesis via de novo pathway; CTP from UDP: step 2/2. Allosterically activated by GTP, when glutamine is the substrate; GTP has no effect on the reaction when ammonia is the substrate. The allosteric effector GTP functions by stabilizing the protein conformation that binds the tetrahedral intermediate(s) formed during glutamine hydrolysis. Inhibited by the product CTP, via allosteric rather than competitive inhibition. Catalyzes the ATP-dependent amination of UTP to CTP with either L-glutamine or ammonia as the source of nitrogen. Regulates intracellular CTP levels through interactions with the four ribonucleotide triphosphates. The chain is CTP synthase from Pelobacter propionicus (strain DSM 2379 / NBRC 103807 / OttBd1).